Consider the following 173-residue polypeptide: RNA pyrophosphohydrolase (173 aa).

One can recognise a Nudix hydrolase domain in the interval 11–164 (PYRRSVGILV…KKHVYMKIVN (154 aa)). The Nudix box motif lies at 52–73 (GGIDENEEPLDAARRELYEETG).

Belongs to the Nudix hydrolase family. RppH subfamily. The cofactor is a divalent metal cation.

In terms of biological role, accelerates the degradation of transcripts by removing pyrophosphate from the 5'-end of triphosphorylated RNA, leading to a more labile monophosphorylated state that can stimulate subsequent ribonuclease cleavage. The chain is RNA pyrophosphohydrolase from Bartonella henselae (strain ATCC 49882 / DSM 28221 / CCUG 30454 / Houston 1) (Rochalimaea henselae).